We begin with the raw amino-acid sequence, 189 residues long: Peptidyl-tRNA hydrolase (189 aa).

Residue tyrosine 15 coordinates tRNA. The Proton acceptor role is filled by histidine 20. Residues phenylalanine 66, asparagine 68, and asparagine 114 each contribute to the tRNA site.

The protein belongs to the PTH family. In terms of assembly, monomer.

It is found in the cytoplasm. It carries out the reaction an N-acyl-L-alpha-aminoacyl-tRNA + H2O = an N-acyl-L-amino acid + a tRNA + H(+). Functionally, hydrolyzes ribosome-free peptidyl-tRNAs (with 1 or more amino acids incorporated), which drop off the ribosome during protein synthesis, or as a result of ribosome stalling. Its function is as follows. Catalyzes the release of premature peptidyl moieties from peptidyl-tRNA molecules trapped in stalled 50S ribosomal subunits, and thus maintains levels of free tRNAs and 50S ribosomes. The chain is Peptidyl-tRNA hydrolase from Streptococcus pneumoniae serotype 2 (strain D39 / NCTC 7466).